Consider the following 201-residue polypeptide: ATP-dependent Clp protease proteolytic subunit (201 aa).

The Nucleophile role is filled by Ser100. His125 is a catalytic residue.

Belongs to the peptidase S14 family. As to quaternary structure, component of the chloroplastic Clp protease core complex.

The protein localises to the plastid. It localises to the chloroplast stroma. The catalysed reaction is Hydrolysis of proteins to small peptides in the presence of ATP and magnesium. alpha-casein is the usual test substrate. In the absence of ATP, only oligopeptides shorter than five residues are hydrolyzed (such as succinyl-Leu-Tyr-|-NHMec, and Leu-Tyr-Leu-|-Tyr-Trp, in which cleavage of the -Tyr-|-Leu- and -Tyr-|-Trp bonds also occurs).. In terms of biological role, cleaves peptides in various proteins in a process that requires ATP hydrolysis. Has a chymotrypsin-like activity. Plays a major role in the degradation of misfolded proteins. In Chloranthus spicatus (Chulantree), this protein is ATP-dependent Clp protease proteolytic subunit.